Here is a 395-residue protein sequence, read N- to C-terminus: S-adenosylmethionine synthase (395 aa).

ATP is bound at residue histidine 15. Mg(2+) is bound at residue aspartate 17. Glutamate 43 is a K(+) binding site. L-methionine is bound by residues glutamate 56 and glutamine 99. The interval glutamine 99–glutamate 109 is flexible loop. Residues aspartate 174–lysine 176, arginine 240–phenylalanine 241, aspartate 249, arginine 255–lysine 256, alanine 272, and lysine 276 each bind ATP. Aspartate 249 contributes to the L-methionine binding site. Residue lysine 280 coordinates L-methionine.

The protein belongs to the AdoMet synthase family. In terms of assembly, homotetramer; dimer of dimers. Mg(2+) serves as cofactor. It depends on K(+) as a cofactor.

The protein localises to the cytoplasm. The catalysed reaction is L-methionine + ATP + H2O = S-adenosyl-L-methionine + phosphate + diphosphate. It participates in amino-acid biosynthesis; S-adenosyl-L-methionine biosynthesis; S-adenosyl-L-methionine from L-methionine: step 1/1. Its function is as follows. Catalyzes the formation of S-adenosylmethionine (AdoMet) from methionine and ATP. The overall synthetic reaction is composed of two sequential steps, AdoMet formation and the subsequent tripolyphosphate hydrolysis which occurs prior to release of AdoMet from the enzyme. The polypeptide is S-adenosylmethionine synthase (Alkaliphilus oremlandii (strain OhILAs) (Clostridium oremlandii (strain OhILAs))).